A 683-amino-acid chain; its full sequence is E3 ubiquitin-protein ligase WAVH1 (683 aa).

An RING-type; atypical zinc finger spans residues 130-176 (CGICLQSVKSGQGTAIFTAECSHTFHFPCVTSRAAANHNRLASCPVC). One can recognise a VWFA domain in the interval 302-438 (DLVAVLDVSG…AHSRIPIHTI (137 aa)).

As to expression, expressed in root tips and leaf primordia.

The catalysed reaction is S-ubiquitinyl-[E2 ubiquitin-conjugating enzyme]-L-cysteine + [acceptor protein]-L-lysine = [E2 ubiquitin-conjugating enzyme]-L-cysteine + N(6)-ubiquitinyl-[acceptor protein]-L-lysine.. Its function is as follows. E3 ubiquitin-protein ligase involved in the regulation of root growth. Acts as a positive regulator of root gravitropism. Possesses E3 protein ligase activity in vitro. This Arabidopsis thaliana (Mouse-ear cress) protein is E3 ubiquitin-protein ligase WAVH1.